The following is a 209-amino-acid chain: Superoxide dismutase [Mn/Fe] (209 aa).

Fe(3+) is bound by residues histidine 38, histidine 90, aspartate 172, and histidine 176. Mn(2+) is bound by residues histidine 38, histidine 90, aspartate 172, and histidine 176.

Belongs to the iron/manganese superoxide dismutase family. It depends on Mn(2+) as a cofactor. Requires Fe(3+) as cofactor.

The enzyme catalyses 2 superoxide + 2 H(+) = H2O2 + O2. Its function is as follows. Destroys superoxide anion radicals which are normally produced within the cells and which are toxic to biological systems. Catalyzes the dismutation of superoxide anion radicals into O2 and H2O2 by successive reduction and oxidation of the transition metal ion at the active site. The sequence is that of Superoxide dismutase [Mn/Fe] (sodB) from Rickettsia bellii (strain RML369-C).